Consider the following 1370-residue polypeptide: DNA-directed RNA polymerase subunit beta (1370 aa).

It belongs to the RNA polymerase beta chain family. The RNAP catalytic core consists of 2 alpha, 1 beta, 1 beta' and 1 omega subunit. When a sigma factor is associated with the core the holoenzyme is formed, which can initiate transcription.

The enzyme catalyses RNA(n) + a ribonucleoside 5'-triphosphate = RNA(n+1) + diphosphate. Functionally, DNA-dependent RNA polymerase catalyzes the transcription of DNA into RNA using the four ribonucleoside triphosphates as substrates. The sequence is that of DNA-directed RNA polymerase subunit beta from Geobacter metallireducens (strain ATCC 53774 / DSM 7210 / GS-15).